A 165-amino-acid polypeptide reads, in one-letter code: Hemolysin, heat labile (165 aa).

A disulfide bridge connects residues Cys-151 and Cys-161.

Belongs to the TDH hemolysin family. As to quaternary structure, homodimer.

Bacterial hemolysins are exotoxins that attack blood cell membranes and cause cell rupture by mechanisms not clearly defined. This Grimontia hollisae (Vibrio hollisae) protein is Hemolysin, heat labile.